A 251-amino-acid chain; its full sequence is DNA repair protein RecO (251 aa).

It belongs to the RecO family.

Functionally, involved in DNA repair and RecF pathway recombination. The chain is DNA repair protein RecO from Albidiferax ferrireducens (strain ATCC BAA-621 / DSM 15236 / T118) (Rhodoferax ferrireducens).